The following is a 201-amino-acid chain: Phosphoheptose isomerase 2 (201 aa).

The region spanning 39–198 is the SIS domain; that stretch reads VIKAYKNGNK…EEELFGKGFS (160 aa). 54 to 56 lines the substrate pocket; sequence NGG. Residues H63 and E67 each contribute to the Zn(2+) site. Residues E67, 96 to 97, 122 to 124, S127, and Q174 each bind substrate; these read ND and STS. Zn(2+) contacts are provided by Q174 and H182.

This sequence belongs to the SIS family. GmhA subfamily. In terms of assembly, homotetramer. The cofactor is Zn(2+).

The protein localises to the cytoplasm. The catalysed reaction is 2 D-sedoheptulose 7-phosphate = D-glycero-alpha-D-manno-heptose 7-phosphate + D-glycero-beta-D-manno-heptose 7-phosphate. The protein operates within carbohydrate biosynthesis; D-glycero-D-manno-heptose 7-phosphate biosynthesis; D-glycero-alpha-D-manno-heptose 7-phosphate and D-glycero-beta-D-manno-heptose 7-phosphate from sedoheptulose 7-phosphate: step 1/1. It functions in the pathway capsule biogenesis; capsule polysaccharide biosynthesis. In terms of biological role, catalyzes the isomerization of sedoheptulose 7-phosphate in D-glycero-D-manno-heptose 7-phosphate. No activity with L-galacto-heptulose, L-galacto-heptulose 7-phosphate or D-manno-heptulose. In Campylobacter jejuni subsp. jejuni serotype O:2 (strain ATCC 700819 / NCTC 11168), this protein is Phosphoheptose isomerase 2.